The chain runs to 117 residues: Large ribosomal subunit protein uL18 (117 aa).

Belongs to the universal ribosomal protein uL18 family. In terms of assembly, part of the 50S ribosomal subunit; part of the 5S rRNA/L5/L18/L25 subcomplex. Contacts the 5S and 23S rRNAs.

Its function is as follows. This is one of the proteins that bind and probably mediate the attachment of the 5S RNA into the large ribosomal subunit, where it forms part of the central protuberance. This is Large ribosomal subunit protein uL18 from Alkalilimnicola ehrlichii (strain ATCC BAA-1101 / DSM 17681 / MLHE-1).